We begin with the raw amino-acid sequence, 451 residues long: Multidrug export protein MepA (451 aa).

12 helical membrane passes run 26 to 46 (MIGTLLSVIYGILNIYFIGFL), 54 to 74 (AISLTLPVFAILMGLGNLFGV), 97 to 117 (SFSIYGGIALGLIVILVALPF), 139 to 159 (LKVMFLSAPFVILFFILEQFA), 170 to 190 (IGMLASVGLNIILDPILIFGF), 194 to 214 (VVGAALGTAISNVAAALFFII), 245 to 265 (IPAFLMSILMGFTGLVLNLFL), 282 to 302 (LVQFPELIIMGLCEGVVPLIA), 318 to 338 (AVIMSIGVIFVVCMIAVFTIG), 355 to 375 (ATFILKVTMTSLLLNGIGFLF), 397 to 417 (VVIIPVLFIMNALFGLTGVIW), and 418 to 438 (SLLIAESLCALAAMLIVYLLR).

The protein belongs to the multi antimicrobial extrusion (MATE) (TC 2.A.66.1) family. MepA subfamily.

It is found in the cell membrane. In terms of biological role, multidrug resistance efflux protein. This chain is Multidrug export protein MepA (mepA), found in Staphylococcus aureus (strain MRSA252).